The sequence spans 348 residues: D-alanine--D-alanine ligase (348 aa).

The ATP-grasp domain maps to 132-334 (KRVLESIGIP…YPDLIEELVT (203 aa)). 162–217 (LARLTFPIFVKPANMGSSVGISKAQTKVELRKAIQLALTYDSRVLIEQGVIAREIE) contacts ATP. The Mg(2+) site is built by Asp288, Glu301, and Asn303.

This sequence belongs to the D-alanine--D-alanine ligase family. Requires Mg(2+) as cofactor. Mn(2+) is required as a cofactor.

It is found in the cytoplasm. The catalysed reaction is 2 D-alanine + ATP = D-alanyl-D-alanine + ADP + phosphate + H(+). Its pathway is cell wall biogenesis; peptidoglycan biosynthesis. Its function is as follows. Cell wall formation. The polypeptide is D-alanine--D-alanine ligase (Streptococcus pyogenes serotype M4 (strain MGAS10750)).